Reading from the N-terminus, the 127-residue chain is Thioredoxin domain-containing protein 8 (127 aa).

The Thioredoxin domain maps to 2-127 (VKRIKNMSEL…QLEKKIQELM (126 aa)). Residues C32 and C35 are joined by a disulfide bond.

The protein belongs to the thioredoxin family. As to expression, testis-specific. Only expressed during spermiogenesis, prominently in the Golgi apparatus of pachytene spermatocytes and round and elongated spermatids, with a transient localization in the developing acrosome of round spermatids (at protein level).

Its subcellular location is the cytoplasm. It localises to the golgi apparatus. May be required for post-translational modifications of proteins required for acrosomal biogenesis. May act by reducing disulfide bonds within the sperm. This is Thioredoxin domain-containing protein 8 (Txndc8) from Mus musculus (Mouse).